The chain runs to 344 residues: Succinylglutamate desuccinylase (344 aa).

Residues His63, Glu66, and His160 each contribute to the Zn(2+) site. Residue Glu224 is part of the active site.

Belongs to the AspA/AstE family. Succinylglutamate desuccinylase subfamily. Zn(2+) serves as cofactor.

It catalyses the reaction N-succinyl-L-glutamate + H2O = L-glutamate + succinate. The protein operates within amino-acid degradation; L-arginine degradation via AST pathway; L-glutamate and succinate from L-arginine: step 5/5. Transforms N(2)-succinylglutamate into succinate and glutamate. This chain is Succinylglutamate desuccinylase, found in Shewanella sp. (strain MR-7).